Reading from the N-terminus, the 602-residue chain is Elongation factor 4 (602 aa).

One can recognise a tr-type G domain in the interval 6–188 (RNVRNFSIIA…RITEVVPEPA (183 aa)). GTP contacts are provided by residues 18 to 23 (DHGKST) and 135 to 138 (NKID).

Belongs to the TRAFAC class translation factor GTPase superfamily. Classic translation factor GTPase family. LepA subfamily.

The protein resides in the cell membrane. The enzyme catalyses GTP + H2O = GDP + phosphate + H(+). In terms of biological role, required for accurate and efficient protein synthesis under certain stress conditions. May act as a fidelity factor of the translation reaction, by catalyzing a one-codon backward translocation of tRNAs on improperly translocated ribosomes. Back-translocation proceeds from a post-translocation (POST) complex to a pre-translocation (PRE) complex, thus giving elongation factor G a second chance to translocate the tRNAs correctly. Binds to ribosomes in a GTP-dependent manner. In Oceanobacillus iheyensis (strain DSM 14371 / CIP 107618 / JCM 11309 / KCTC 3954 / HTE831), this protein is Elongation factor 4.